Here is a 506-residue protein sequence, read N- to C-terminus: Lysine--tRNA ligase (506 aa).

Residues glutamate 411 and glutamate 418 each contribute to the Mg(2+) site.

It belongs to the class-II aminoacyl-tRNA synthetase family. As to quaternary structure, homodimer. Mg(2+) serves as cofactor.

The protein resides in the cytoplasm. It carries out the reaction tRNA(Lys) + L-lysine + ATP = L-lysyl-tRNA(Lys) + AMP + diphosphate. The sequence is that of Lysine--tRNA ligase from Thermosynechococcus vestitus (strain NIES-2133 / IAM M-273 / BP-1).